The primary structure comprises 72 residues: Translation initiation factor IF-1 (72 aa).

Residues 1–72 enclose the S1-like domain; sequence MAKEDTIQMQ…TRARIVFRAR (72 aa).

This sequence belongs to the IF-1 family. Component of the 30S ribosomal translation pre-initiation complex which assembles on the 30S ribosome in the order IF-2 and IF-3, IF-1 and N-formylmethionyl-tRNA(fMet); mRNA recruitment can occur at any time during PIC assembly.

It localises to the cytoplasm. Its function is as follows. One of the essential components for the initiation of protein synthesis. Stabilizes the binding of IF-2 and IF-3 on the 30S subunit to which N-formylmethionyl-tRNA(fMet) subsequently binds. Helps modulate mRNA selection, yielding the 30S pre-initiation complex (PIC). Upon addition of the 50S ribosomal subunit IF-1, IF-2 and IF-3 are released leaving the mature 70S translation initiation complex. This Neisseria gonorrhoeae (strain ATCC 700825 / FA 1090) protein is Translation initiation factor IF-1.